The sequence spans 402 residues: Pyridinium-3,5-bisthiocarboxylic acid mononucleotide nickel insertion protein (402 aa).

The protein belongs to the LarC family.

It carries out the reaction Ni(II)-pyridinium-3,5-bisthiocarboxylate mononucleotide = pyridinium-3,5-bisthiocarboxylate mononucleotide + Ni(2+). In terms of biological role, involved in the biosynthesis of a nickel-pincer cofactor ((SCS)Ni(II) pincer complex). Binds Ni(2+), and functions in nickel delivery to pyridinium-3,5-bisthiocarboxylic acid mononucleotide (P2TMN), to form the mature cofactor. Is thus probably required for the activation of nickel-pincer cofactor-dependent enzymes. This Desulfitobacterium hafniense (strain Y51) protein is Pyridinium-3,5-bisthiocarboxylic acid mononucleotide nickel insertion protein.